A 574-amino-acid chain; its full sequence is Cell division cycle 7-related protein kinase (574 aa).

S27 is modified (phosphoserine). One can recognise a Protein kinase domain in the interval 58–574; that stretch reads FKIEDKIGEG…LHPFFKDMSL (517 aa). ATP contacts are provided by residues 64-72 and K90; that span reads IGEGTFSSV. The active-site Proton acceptor is D177. Residue K268 forms a Glycyl lysine isopeptide (Lys-Gly) (interchain with G-Cter in SUMO2) linkage. A Phosphothreonine modification is found at T503.

The protein belongs to the protein kinase superfamily. Ser/Thr protein kinase family. CDC7 subfamily. In terms of assembly, forms a complex with either DBF4/DBF4A or DBF4B, leading to the activation of the kinase activity. Interacts with CLASPIN (via the acidic patch); the interaction is required for phosphorylation of MCM proteins and CLASPIN. It depends on Mg(2+) as a cofactor.

The protein localises to the nucleus. The enzyme catalyses L-seryl-[protein] + ATP = O-phospho-L-seryl-[protein] + ADP + H(+). It catalyses the reaction L-threonyl-[protein] + ATP = O-phospho-L-threonyl-[protein] + ADP + H(+). In terms of biological role, kinase involved in initiation of DNA replication. Phosphorylates critical substrates that regulate the G1/S phase transition and initiation of DNA replication, such as MCM proteins and CLASPIN. This chain is Cell division cycle 7-related protein kinase, found in Homo sapiens (Human).